Consider the following 1438-residue polypeptide: DNA-directed RNA polymerase subunit beta' (1438 aa).

Zn(2+) is bound by residues Cys-70, Cys-72, Cys-85, and Cys-88. Residues Asp-461, Asp-463, and Asp-465 each coordinate Mg(2+). Zn(2+) is bound by residues Cys-821, Cys-895, Cys-902, and Cys-905. A compositionally biased stretch (low complexity) spans 1413-1427; it reads DAMAAAMGGDSAGGD. Residues 1413 to 1438 are disordered; that stretch reads DAMAAAMGGDSAGGDTKPEAPEASEE.

It belongs to the RNA polymerase beta' chain family. As to quaternary structure, the RNAP catalytic core consists of 2 alpha, 1 beta, 1 beta' and 1 omega subunit. When a sigma factor is associated with the core the holoenzyme is formed, which can initiate transcription. Mg(2+) is required as a cofactor. It depends on Zn(2+) as a cofactor.

The catalysed reaction is RNA(n) + a ribonucleoside 5'-triphosphate = RNA(n+1) + diphosphate. Functionally, DNA-dependent RNA polymerase catalyzes the transcription of DNA into RNA using the four ribonucleoside triphosphates as substrates. The protein is DNA-directed RNA polymerase subunit beta' of Erythrobacter litoralis (strain HTCC2594).